The chain runs to 129 residues: uncharacterized protein (129 aa).

This is an uncharacterized protein from Acheta domesticus (House cricket).